Consider the following 481-residue polypeptide: ATP synthase subunit beta (481 aa).

Residue 167–174 (GGAGVGKT) participates in ATP binding.

It belongs to the ATPase alpha/beta chains family. F-type ATPases have 2 components, CF(1) - the catalytic core - and CF(0) - the membrane proton channel. CF(1) has five subunits: alpha(3), beta(3), gamma(1), delta(1), epsilon(1). CF(0) has three main subunits: a(1), b(2) and c(9-12). The alpha and beta chains form an alternating ring which encloses part of the gamma chain. CF(1) is attached to CF(0) by a central stalk formed by the gamma and epsilon chains, while a peripheral stalk is formed by the delta and b chains.

The protein resides in the cell membrane. The catalysed reaction is ATP + H2O + 4 H(+)(in) = ADP + phosphate + 5 H(+)(out). Its function is as follows. Produces ATP from ADP in the presence of a proton gradient across the membrane. The catalytic sites are hosted primarily by the beta subunits. The sequence is that of ATP synthase subunit beta from Corynebacterium diphtheriae (strain ATCC 700971 / NCTC 13129 / Biotype gravis).